A 346-amino-acid chain; its full sequence is Dihydroorotase (346 aa).

Zn(2+) contacts are provided by H14 and H16. Substrate is bound by residues 16-18 (HLR) and N42. Zn(2+) contacts are provided by K100, H137, and H175. Residue K100 is modified to N6-carboxylysine. H137 contributes to the substrate binding site. L220 provides a ligand contact to substrate. D248 is a binding site for Zn(2+). The active site involves D248. Positions 252 and 264 each coordinate substrate.

The protein belongs to the metallo-dependent hydrolases superfamily. DHOase family. Class II DHOase subfamily. Homodimer. It depends on Zn(2+) as a cofactor.

The catalysed reaction is (S)-dihydroorotate + H2O = N-carbamoyl-L-aspartate + H(+). It functions in the pathway pyrimidine metabolism; UMP biosynthesis via de novo pathway; (S)-dihydroorotate from bicarbonate: step 3/3. Catalyzes the reversible cyclization of carbamoyl aspartate to dihydroorotate. This Ruegeria pomeroyi (strain ATCC 700808 / DSM 15171 / DSS-3) (Silicibacter pomeroyi) protein is Dihydroorotase.